The following is a 380-amino-acid chain: TPR repeat-containing thioredoxin TDX (380 aa).

N-acetylvaline is present on Val-2. The span at 49 to 59 (TERDYEDKAET) shows a compositional bias: basic and acidic residues. Residues 49 to 115 (TERDYEDKAE…DENRDDAQSE (67 aa)) are disordered. The segment covering 69–91 (DDDDDIMESDVELDNSDVVEPDN) has biased composition (acidic residues). Residues 106 to 115 (DENRDDAQSE) are compositionally biased toward basic and acidic residues. TPR repeat units lie at residues 112–145 (AQSEKSKAMEAISDGRFDEAIEHLTKAVMLNPTS), 147–179 (ILYATRASVFLKVKKPNAAIRDANVALQFNSDS), and 181–213 (KGYKSRGMAKAMLGQWEEAAADLHVASKLDYDE). Over residues 240–263 (RKEKELQRAERERRKQQEAQEREA) the composition is skewed to basic and acidic residues. The disordered stretch occupies residues 240–265 (RKEKELQRAERERRKQQEAQEREAQA). Residues 252 to 378 (RRKQQEAQER…LEQKIAQHSS (127 aa)) form the Thioredoxin domain. Catalysis depends on nucleophile residues Cys-304 and Cys-307. The cysteines at positions 304 and 307 are disulfide-linked.

This sequence belongs to the thioredoxin family. Oligomerization under high temperature.

Its function is as follows. Thiol-disulfide oxidoreductase that possesses insulin disulfide bonds reducing activity, disulfide reductase, foldase chaperone and holdase chaperone activities. Heat shock causes oligomerization and formation of high molecular weiht (HMW) complexes with concomitant functional switching from a disulfide reductase and foldase chaperone to a holdase chaperone. May interact with HSP70 proteins through the TPR repeats. The protein is TPR repeat-containing thioredoxin TDX (TDX) of Arabidopsis thaliana (Mouse-ear cress).